A 657-amino-acid chain; its full sequence is DNA mismatch repair protein MutL (657 aa).

This sequence belongs to the DNA mismatch repair MutL/HexB family.

Its function is as follows. This protein is involved in the repair of mismatches in DNA. It is required for dam-dependent methyl-directed DNA mismatch repair. May act as a 'molecular matchmaker', a protein that promotes the formation of a stable complex between two or more DNA-binding proteins in an ATP-dependent manner without itself being part of a final effector complex. The sequence is that of DNA mismatch repair protein MutL from Streptococcus agalactiae serotype Ia (strain ATCC 27591 / A909 / CDC SS700).